The chain runs to 465 residues: Trigger factor (465 aa).

The PPIase FKBP-type domain occupies 164-245; the sequence is GDFVSIDLSA…VQSVKERELP (82 aa). Residues 430-465 are disordered; that stretch reads GNTVDTAEMFGEPAAEPEQADAAQAGDAEKAAADSE. Over residues 440–455 the composition is skewed to low complexity; that stretch reads GEPAAEPEQADAAQAG. The segment covering 456–465 has biased composition (basic and acidic residues); the sequence is DAEKAAADSE.

This sequence belongs to the FKBP-type PPIase family. Tig subfamily.

Its subcellular location is the cytoplasm. It carries out the reaction [protein]-peptidylproline (omega=180) = [protein]-peptidylproline (omega=0). Involved in protein export. Acts as a chaperone by maintaining the newly synthesized protein in an open conformation. Functions as a peptidyl-prolyl cis-trans isomerase. This chain is Trigger factor, found in Nocardia farcinica (strain IFM 10152).